Reading from the N-terminus, the 234-residue chain is Large ribosomal subunit protein uL1 (234 aa).

Belongs to the universal ribosomal protein uL1 family. Part of the 50S ribosomal subunit.

Binds directly to 23S rRNA. The L1 stalk is quite mobile in the ribosome, and is involved in E site tRNA release. In terms of biological role, protein L1 is also a translational repressor protein, it controls the translation of the L11 operon by binding to its mRNA. The chain is Large ribosomal subunit protein uL1 from Anaeromyxobacter dehalogenans (strain 2CP-1 / ATCC BAA-258).